The sequence spans 479 residues: Anaerobic nitric oxide reductase flavorubredoxin (479 aa).

Residues 30–210 (LRGSSYNSYL…PFSRLVTPKI (181 aa)) are zinc metallo-hydrolase. The Fe cation site is built by H79, E81, D83, H147, D166, and H227. One can recognise a Flavodoxin-like domain in the interval 254-393 (ITIFYDTMSN…LCREHGREIA (140 aa)). FMN is bound by residues 260 to 264 (TMSNN) and 342 to 369 (AFGS…EMSL). One can recognise a Rubredoxin-like domain in the interval 423-474 (GPRMQCSVCQWIYDPAKGEPMQDVAPGTPWSEVPDNFLCPECSLGKDVFDEL). 4 residues coordinate Fe cation: C428, C431, C461, and C464.

It in the N-terminal section; belongs to the zinc metallo-hydrolase group 3 family. In terms of assembly, homotetramer. It depends on Fe cation as a cofactor. FMN serves as cofactor.

The protein resides in the cytoplasm. The protein operates within nitrogen metabolism; nitric oxide reduction. Anaerobic nitric oxide reductase; uses NADH to detoxify nitric oxide (NO), protecting several 4Fe-4S NO-sensitive enzymes. Has at least 2 reductase partners, only one of which (NorW, flavorubredoxin reductase) has been identified. NO probably binds to the di-iron center; electrons enter from the NorW at rubredoxin and are transferred sequentially to the FMN center and the di-iron center. Also able to function as an aerobic oxygen reductase. The protein is Anaerobic nitric oxide reductase flavorubredoxin of Shigella flexneri serotype 5b (strain 8401).